The chain runs to 386 residues: Na(+)/H(+) antiporter NhaA (386 aa).

The next 10 membrane-spanning stretches (helical) occupy residues Glu-10–Pro-30, Leu-45–Val-65, Leu-84–Leu-104, Gly-116–Phe-136, Val-142–Ala-162, Val-169–Ile-189, Ile-261–Ala-281, Trp-287–Leu-307, His-323–Gly-343, and Gly-358–Ile-378.

This sequence belongs to the NhaA Na(+)/H(+) (TC 2.A.33) antiporter family.

Its subcellular location is the cell inner membrane. The enzyme catalyses Na(+)(in) + 2 H(+)(out) = Na(+)(out) + 2 H(+)(in). In terms of biological role, na(+)/H(+) antiporter that extrudes sodium in exchange for external protons. This Geotalea uraniireducens (strain Rf4) (Geobacter uraniireducens) protein is Na(+)/H(+) antiporter NhaA.